The following is a 216-amino-acid chain: MEWRFADTPVSYPEALAFMDDRIAKIREDRAGECVWLLEHPPLYTAGTSADPADLLSPDRFPVYAAGRGGQYTYHGPGQRVGYVMLDLRRRGKDVRCFVHNLEELMIRALAEFNIRGERREGRVGIWVARGGGREDKIGAIGVRVRHWITFHGFALNVEPDLSHFSGIVPCGISDHGVTSLWDLGQTATLQEVDSALMRSFDAVFGPCPTESLTST.

Positions 29-209 (DRAGECVWLL…SFDAVFGPCP (181 aa)) constitute a BPL/LPL catalytic domain. Substrate is bound by residues 68–75 (RGGQYTYH), 140–142 (AIG), and 153–155 (GFA). Cysteine 171 functions as the Acyl-thioester intermediate in the catalytic mechanism.

It belongs to the LipB family.

The protein localises to the cytoplasm. The enzyme catalyses octanoyl-[ACP] + L-lysyl-[protein] = N(6)-octanoyl-L-lysyl-[protein] + holo-[ACP] + H(+). The protein operates within protein modification; protein lipoylation via endogenous pathway; protein N(6)-(lipoyl)lysine from octanoyl-[acyl-carrier-protein]: step 1/2. Functionally, catalyzes the transfer of endogenously produced octanoic acid from octanoyl-acyl-carrier-protein onto the lipoyl domains of lipoate-dependent enzymes. Lipoyl-ACP can also act as a substrate although octanoyl-ACP is likely to be the physiological substrate. The sequence is that of Octanoyltransferase from Rhodospirillum rubrum (strain ATCC 11170 / ATH 1.1.1 / DSM 467 / LMG 4362 / NCIMB 8255 / S1).